The sequence spans 351 residues: S-adenosylmethionine:tRNA ribosyltransferase-isomerase (351 aa).

Belongs to the QueA family. In terms of assembly, monomer.

It localises to the cytoplasm. It catalyses the reaction 7-aminomethyl-7-carbaguanosine(34) in tRNA + S-adenosyl-L-methionine = epoxyqueuosine(34) in tRNA + adenine + L-methionine + 2 H(+). Its pathway is tRNA modification; tRNA-queuosine biosynthesis. Its function is as follows. Transfers and isomerizes the ribose moiety from AdoMet to the 7-aminomethyl group of 7-deazaguanine (preQ1-tRNA) to give epoxyqueuosine (oQ-tRNA). The sequence is that of S-adenosylmethionine:tRNA ribosyltransferase-isomerase from Phocaeicola vulgatus (strain ATCC 8482 / DSM 1447 / JCM 5826 / CCUG 4940 / NBRC 14291 / NCTC 11154) (Bacteroides vulgatus).